We begin with the raw amino-acid sequence, 294 residues long: ATP phosphoribosyltransferase (294 aa).

It belongs to the ATP phosphoribosyltransferase family. Long subfamily. Mg(2+) is required as a cofactor.

It localises to the cytoplasm. It carries out the reaction 1-(5-phospho-beta-D-ribosyl)-ATP + diphosphate = 5-phospho-alpha-D-ribose 1-diphosphate + ATP. The protein operates within amino-acid biosynthesis; L-histidine biosynthesis; L-histidine from 5-phospho-alpha-D-ribose 1-diphosphate: step 1/9. Its activity is regulated as follows. Feedback inhibited by histidine. In terms of biological role, catalyzes the condensation of ATP and 5-phosphoribose 1-diphosphate to form N'-(5'-phosphoribosyl)-ATP (PR-ATP). Has a crucial role in the pathway because the rate of histidine biosynthesis seems to be controlled primarily by regulation of HisG enzymatic activity. The polypeptide is ATP phosphoribosyltransferase (Chlorobaculum parvum (strain DSM 263 / NCIMB 8327) (Chlorobium vibrioforme subsp. thiosulfatophilum)).